Here is a 232-residue protein sequence, read N- to C-terminus: Ribonuclease P protein component 3 (232 aa).

Belongs to the eukaryotic/archaeal RNase P protein component 3 family. As to quaternary structure, consists of a catalytic RNA component and at least 4-5 protein subunits. Forms a subcomplex with Rnp2 which stimulates the catalytic RNA.

The protein resides in the cytoplasm. It catalyses the reaction Endonucleolytic cleavage of RNA, removing 5'-extranucleotides from tRNA precursor.. Its function is as follows. Part of ribonuclease P, a protein complex that generates mature tRNA molecules by cleaving their 5'-ends. The sequence is that of Ribonuclease P protein component 3 from Methanocaldococcus jannaschii (strain ATCC 43067 / DSM 2661 / JAL-1 / JCM 10045 / NBRC 100440) (Methanococcus jannaschii).